The sequence spans 329 residues: MYG1 protein (329 aa).

This sequence belongs to the MYG1 family.

This Dictyostelium discoideum (Social amoeba) protein is MYG1 protein.